We begin with the raw amino-acid sequence, 272 residues long: NH(3)-dependent NAD(+) synthetase (272 aa).

Glycine 45–serine 52 serves as a coordination point for ATP. Aspartate 51 lines the Mg(2+) pocket. Arginine 138 serves as a coordination point for deamido-NAD(+). Position 158 (threonine 158) interacts with ATP. Residue glutamate 163 participates in Mg(2+) binding. Lysine 171 and aspartate 178 together coordinate deamido-NAD(+). ATP is bound by residues lysine 187 and threonine 209. Histidine 258–lysine 259 contributes to the deamido-NAD(+) binding site.

Belongs to the NAD synthetase family. As to quaternary structure, homodimer.

The enzyme catalyses deamido-NAD(+) + NH4(+) + ATP = AMP + diphosphate + NAD(+) + H(+). The protein operates within cofactor biosynthesis; NAD(+) biosynthesis; NAD(+) from deamido-NAD(+) (ammonia route): step 1/1. Functionally, catalyzes the ATP-dependent amidation of deamido-NAD to form NAD. Uses ammonia as a nitrogen source. The polypeptide is NH(3)-dependent NAD(+) synthetase (Bacillus thuringiensis subsp. konkukian (strain 97-27)).